The chain runs to 275 residues: Large ribosomal subunit protein uL2c (275 aa).

The tract at residues 219-255 (TVRGSVMNPCDHPHGGGEGRAPIGRTRPLTPWGKPAL) is disordered.

It belongs to the universal ribosomal protein uL2 family. In terms of assembly, part of the 50S ribosomal subunit.

It localises to the plastid. Its subcellular location is the chloroplast. The chain is Large ribosomal subunit protein uL2c (rpl2) from Trieres chinensis (Marine centric diatom).